We begin with the raw amino-acid sequence, 434 residues long: Enolase (434 aa).

Glutamine 163 is a binding site for (2R)-2-phosphoglycerate. Glutamate 205 (proton donor) is an active-site residue. The Mg(2+) site is built by aspartate 242, glutamate 289, and aspartate 316. (2R)-2-phosphoglycerate contacts are provided by lysine 341, arginine 370, serine 371, and lysine 392. The Proton acceptor role is filled by lysine 341.

Belongs to the enolase family. Requires Mg(2+) as cofactor.

It is found in the cytoplasm. It localises to the secreted. The protein resides in the cell surface. It carries out the reaction (2R)-2-phosphoglycerate = phosphoenolpyruvate + H2O. Its pathway is carbohydrate degradation; glycolysis; pyruvate from D-glyceraldehyde 3-phosphate: step 4/5. Its function is as follows. Catalyzes the reversible conversion of 2-phosphoglycerate (2-PG) into phosphoenolpyruvate (PEP). It is essential for the degradation of carbohydrates via glycolysis. The sequence is that of Enolase from Lacticaseibacillus paracasei (strain ATCC 334 / BCRC 17002 / CCUG 31169 / CIP 107868 / KCTC 3260 / NRRL B-441) (Lactobacillus paracasei).